Consider the following 185-residue polypeptide: Ribosome-recycling factor (185 aa).

It belongs to the RRF family.

It is found in the cytoplasm. Functionally, responsible for the release of ribosomes from messenger RNA at the termination of protein biosynthesis. May increase the efficiency of translation by recycling ribosomes from one round of translation to another. The protein is Ribosome-recycling factor of Lacticaseibacillus casei (strain BL23) (Lactobacillus casei).